Here is a 396-residue protein sequence, read N- to C-terminus: MSIASNSTVIILGSTGSIGTQGLDVISRHPERFTVTGLAAGGAHIELLAQQAAQFHVSEAAVFDETKVPALQAALAQAGAQGVRVTGGPDSVIAMAGSGANVVLNGITGSIGLEPSIAALKAGSQLALANKESVVAGGHLLFSAQVRENQINPVDSEHSAIWQSLRSGTHAEVAKLVVTASGGPFRGWKRADMENITPEQALHHPTWNMGPVVTINSSTLMNKGLEVIEASRLFNVPPERIDVTVHPQSIVHSMVEFVDGATICQASPPDMRLPIALGLSAPDRMTNVAAACDWTQAATWTFEPLDDEAFPAVQLARHCLAASEKHTAVLNAANEQAVHAFLEHRLPYLGIVDTVKAVLDQMDAELRGNPLFTDVEEMNQLELEARRRADDLINKQ.

Residues Thr15, Gly16, Ser17, Ile18, Gly41, and Asn130 each contribute to the NADPH site. A 1-deoxy-D-xylulose 5-phosphate-binding site is contributed by Lys131. An NADPH-binding site is contributed by Glu132. Residue Asp155 participates in Mn(2+) binding. The 1-deoxy-D-xylulose 5-phosphate site is built by Ser156, Glu157, Ser181, and His204. Glu157 lines the Mn(2+) pocket. Gly210 is a binding site for NADPH. 1-deoxy-D-xylulose 5-phosphate-binding residues include Ser217, Asn222, Lys223, and Glu226. Residue Glu226 coordinates Mn(2+).

The protein belongs to the DXR family. Mg(2+) serves as cofactor. Mn(2+) is required as a cofactor.

The enzyme catalyses 2-C-methyl-D-erythritol 4-phosphate + NADP(+) = 1-deoxy-D-xylulose 5-phosphate + NADPH + H(+). The protein operates within isoprenoid biosynthesis; isopentenyl diphosphate biosynthesis via DXP pathway; isopentenyl diphosphate from 1-deoxy-D-xylulose 5-phosphate: step 1/6. Functionally, catalyzes the NADPH-dependent rearrangement and reduction of 1-deoxy-D-xylulose-5-phosphate (DXP) to 2-C-methyl-D-erythritol 4-phosphate (MEP). This chain is 1-deoxy-D-xylulose 5-phosphate reductoisomerase, found in Bifidobacterium longum (strain DJO10A).